The chain runs to 517 residues: Maturase K (517 aa).

This sequence belongs to the intron maturase 2 family. MatK subfamily.

It localises to the plastid. Its subcellular location is the chloroplast. In terms of biological role, usually encoded in the trnK tRNA gene intron. Probably assists in splicing its own and other chloroplast group II introns. The polypeptide is Maturase K (Trillium maculatum (Spotted wakerobin)).